The sequence spans 101 residues: Small ribosomal subunit protein uS14 (101 aa).

It belongs to the universal ribosomal protein uS14 family. Part of the 30S ribosomal subunit. Contacts proteins S3 and S10.

Its function is as follows. Binds 16S rRNA, required for the assembly of 30S particles and may also be responsible for determining the conformation of the 16S rRNA at the A site. The sequence is that of Small ribosomal subunit protein uS14 from Chromohalobacter salexigens (strain ATCC BAA-138 / DSM 3043 / CIP 106854 / NCIMB 13768 / 1H11).